Consider the following 209-residue polypeptide: Uracil phosphoribosyltransferase (209 aa).

5-phospho-alpha-D-ribose 1-diphosphate is bound by residues arginine 79, arginine 104, and 131 to 139 (DPMLATGGS). Residues isoleucine 194 and 199–201 (GDA) contribute to the uracil site. Residue aspartate 200 participates in 5-phospho-alpha-D-ribose 1-diphosphate binding.

Belongs to the UPRTase family. Requires Mg(2+) as cofactor.

The catalysed reaction is UMP + diphosphate = 5-phospho-alpha-D-ribose 1-diphosphate + uracil. It functions in the pathway pyrimidine metabolism; UMP biosynthesis via salvage pathway; UMP from uracil: step 1/1. Allosterically activated by GTP. Catalyzes the conversion of uracil and 5-phospho-alpha-D-ribose 1-diphosphate (PRPP) to UMP and diphosphate. In Shouchella clausii (strain KSM-K16) (Alkalihalobacillus clausii), this protein is Uracil phosphoribosyltransferase.